A 733-amino-acid chain; its full sequence is Arginine decarboxylase 1A, chloroplastic (733 aa).

The transit peptide at 1-44 directs the protein to the chloroplast; it reads MPALGCCVDAAVSPPPGYSFLWDSSLPAPEIFPSGVPPSTNTAV. An N6-(pyridoxal phosphate)lysine modification is found at lysine 157. Pyridoxal 5'-phosphate-binding positions include serine 309, glycine 346, and 395 to 398; that span reads ESGR. 460–461 lines the substrate pocket; the sequence is YA. Residue cysteine 548 is the Proton donor; shared with dimeric partner of the active site. Aspartate 549 lines the substrate pocket. A pyridoxal 5'-phosphate-binding site is contributed by tyrosine 592.

This sequence belongs to the Orn/Lys/Arg decarboxylase class-II family. SpeA subfamily. In terms of assembly, interacts, via its C-terminal internal region, with the tobacco mosaic virus (TMV) replicase helicase region. Mg(2+) is required as a cofactor. Pyridoxal 5'-phosphate serves as cofactor.

The protein localises to the plastid. It is found in the chloroplast. It carries out the reaction L-arginine + H(+) = agmatine + CO2. It participates in alkaloid biosynthesis; nicotine biosynthesis. It functions in the pathway amine and polyamine biosynthesis; agmatine biosynthesis; agmatine from L-arginine: step 1/1. In terms of biological role, involved in the biosynthesis of pyridine alkaloid natural products, leading mainly to the production of anabasine, anatabine, nicotine and nornicotine, effective deterrents against herbivores with antiparasitic and pesticide properties (neurotoxins); nornicotine serves as the precursor in the synthesis of the carcinogen compound N'-nitrosonornicotine (NNN). Required for the biosynthesis of putrescine. Catalyzes the first step of polyamine (PA) biosynthesis to produce putrescine from arginine. This is Arginine decarboxylase 1A, chloroplastic from Nicotiana tabacum (Common tobacco).